The sequence spans 472 residues: 3-isopropylmalate dehydratase large subunit (472 aa).

[4Fe-4S] cluster-binding residues include cysteine 347, cysteine 407, and cysteine 410.

It belongs to the aconitase/IPM isomerase family. LeuC type 1 subfamily. As to quaternary structure, heterodimer of LeuC and LeuD. It depends on [4Fe-4S] cluster as a cofactor.

It catalyses the reaction (2R,3S)-3-isopropylmalate = (2S)-2-isopropylmalate. It participates in amino-acid biosynthesis; L-leucine biosynthesis; L-leucine from 3-methyl-2-oxobutanoate: step 2/4. Its function is as follows. Catalyzes the isomerization between 2-isopropylmalate and 3-isopropylmalate, via the formation of 2-isopropylmaleate. This is 3-isopropylmalate dehydratase large subunit from Bacillus subtilis (strain 168).